A 540-amino-acid polypeptide reads, in one-letter code: Synaptotagmin-3 (540 aa).

The helical transmembrane segment at 9–29 threads the bilayer; sequence GIIGFVIGIPIGLILGFFVLI. In terms of domain architecture, SMP-LTD spans 67 to 249; that stretch reads DYERVDWFNK…WPQVLEIPIL (183 aa). A phospholipid binding region spans residues 227–509; that stretch reads QETIKRQVSS…ELGHVDINLD (283 aa). 2 C2 domains span residues 240–363 and 401–521; these read WPQV…EFNL and RKES…NQKY. Positions 277, 283, 333, 335, and 341 each coordinate Ca(2+).

This sequence belongs to the synaptotagmin family. Ca(2+) serves as cofactor.

It localises to the membrane. In terms of biological role, may be involved in membrane trafficking. The polypeptide is Synaptotagmin-3 (SYT3) (Arabidopsis thaliana (Mouse-ear cress)).